The sequence spans 399 residues: Elongation factor Tu (399 aa).

The tr-type G domain maps to 10–209; sequence KPHVNIGTIG…AVDSYIPTPV (200 aa). Residues 19-26 form a G1 region; sequence GHVDHGKT. Residue 19–26 coordinates GTP; that stretch reads GHVDHGKT. Position 26 (T26) interacts with Mg(2+). The segment at 60–64 is G2; that stretch reads GITIA. The G3 stretch occupies residues 81-84; that stretch reads DCPG. GTP is bound by residues 81 to 85 and 136 to 139; these read DCPGH and NKAD. The G4 stretch occupies residues 136 to 139; sequence NKAD. Positions 174-176 are G5; the sequence is SAL.

The protein belongs to the TRAFAC class translation factor GTPase superfamily. Classic translation factor GTPase family. EF-Tu/EF-1A subfamily. As to quaternary structure, monomer.

It localises to the cytoplasm. The catalysed reaction is GTP + H2O = GDP + phosphate + H(+). Its function is as follows. GTP hydrolase that promotes the GTP-dependent binding of aminoacyl-tRNA to the A-site of ribosomes during protein biosynthesis. This is Elongation factor Tu from Campylobacter fetus subsp. fetus (strain 82-40).